The chain runs to 484 residues: D-aminoacylase (484 aa).

The protein belongs to the metallo-dependent hydrolases superfamily. N-acyl-D-amino-acid deacylase family. Zn(2+) serves as cofactor.

The protein localises to the cytoplasm. It catalyses the reaction an N-acyl-D-amino acid + H2O = a D-alpha-amino acid + a carboxylate. Has a wide specificity; hydrolyzes N-acyl derivative of neutral D-amino acids. In Alcaligenes xylosoxydans xylosoxydans (Achromobacter xylosoxidans), this protein is D-aminoacylase (dan).